A 58-amino-acid polypeptide reads, in one-letter code: Photosystem II reaction center protein K (58 aa).

Positions 1-21 (MFDLYLKNLLDLSDSGTVVLA) are excised as a propeptide. A helical membrane pass occupies residues 29–49 (IFDPIVDVLPVIPVFFLLLAF).

This sequence belongs to the PsbK family. In terms of assembly, PSII is composed of 1 copy each of membrane proteins PsbA, PsbB, PsbC, PsbD, PsbE, PsbF, PsbH, PsbI, PsbJ, PsbK, PsbL, PsbM, PsbT, PsbX, PsbY, PsbZ, Psb30/Ycf12, at least 3 peripheral proteins of the oxygen-evolving complex and a large number of cofactors. It forms dimeric complexes.

It localises to the plastid. Its subcellular location is the chloroplast thylakoid membrane. Its function is as follows. One of the components of the core complex of photosystem II (PSII). PSII is a light-driven water:plastoquinone oxidoreductase that uses light energy to abstract electrons from H(2)O, generating O(2) and a proton gradient subsequently used for ATP formation. It consists of a core antenna complex that captures photons, and an electron transfer chain that converts photonic excitation into a charge separation. This chain is Photosystem II reaction center protein K, found in Zygnema circumcarinatum (Green alga).